The chain runs to 173 residues: Ribulose bisphosphate carboxylase small subunit, chloroplastic 3 (173 aa).

The transit peptide at 1–49 (MASIPATVATVAQANMVAPFTGLKSNAAFPVTKKVNDFSTLPSNGGRVQ) directs the protein to the chloroplast.

This sequence belongs to the RuBisCO small chain family. Heterohexadecamer of 8 large and 8 small subunits.

The protein resides in the plastid. It is found in the chloroplast. In terms of biological role, ruBisCO catalyzes two reactions: the carboxylation of D-ribulose 1,5-bisphosphate, the primary event in carbon dioxide fixation, as well as the oxidative fragmentation of the pentose substrate. Both reactions occur simultaneously and in competition at the same active site. Although the small subunit is not catalytic it is essential for maximal activity. The protein is Ribulose bisphosphate carboxylase small subunit, chloroplastic 3 of Flaveria pringlei.